A 52-amino-acid polypeptide reads, in one-letter code: Mitogenic lectin alpha chain (52 aa).

Belongs to the leguminous lectin family. In terms of assembly, tetramer of two alpha and two beta chains.

This is Mitogenic lectin alpha chain from Vicia sativa (Spring vetch).